The following is a 130-amino-acid chain: DNA-binding protein HU (130 aa).

It belongs to the bacterial histone-like protein family.

Its function is as follows. Histone-like DNA-binding protein which is capable of wrapping DNA to stabilize it, and thus to prevent its denaturation under extreme environmental conditions. The sequence is that of DNA-binding protein HU (hup) from Ureaplasma parvum serovar 3 (strain ATCC 700970).